The sequence spans 199 residues: Recombination protein RecR (199 aa).

Residues 56–71 form a C4-type zinc finger; the sequence is CSICFNWSAEDPCEIC. Residues 79–174 enclose the Toprim domain; that stretch reads SLWCVVADVK…TLRMTRLAFG (96 aa).

This sequence belongs to the RecR family.

Functionally, may play a role in DNA repair. It seems to be involved in an RecBC-independent recombinational process of DNA repair. It may act with RecF and RecO. This Synechococcus sp. (strain JA-2-3B'a(2-13)) (Cyanobacteria bacterium Yellowstone B-Prime) protein is Recombination protein RecR.